We begin with the raw amino-acid sequence, 223 residues long: Protein FAM3D (223 aa).

A signal peptide spans 1 to 25 (MRVAGLIRVVVFIFTIVTMWVFLRS). Cystine bridges form between Cys54-Cys82 and Cys60-Cys217. Residues 62 to 221 (NNFFAFKISS…LELEGCVPRK (160 aa)) enclose the GG-type lectin domain. A glycan (N-linked (GlcNAc...) asparagine) is linked at Asn106.

It belongs to the FAM3 family.

The protein localises to the secreted. The sequence is that of Protein FAM3D from Mus musculus (Mouse).